The following is an 88-amino-acid chain: Alpha-latrotoxin-associated low molecular weight protein-2 (88 aa).

A signal peptide spans 1–19; the sequence is MLKLICIAFLVTVLTLVAG. A Pyrrolidone carboxylic acid modification is found at Gln-20. 3 disulfide bridges follow: Cys-30-Cys-66, Cys-46-Cys-62, and Cys-49-Cys-75.

The protein belongs to the arthropod CHH/MIH/GIH/VIH hormone family. Post-translationally, the N-terminus is blocked. Expressed by the venom gland.

It is found in the secreted. May increase the toxicity of alpha-latrotoxin and/or other venom components. Is non-toxic to mice and to the cockroach Periplaneta americana. This Latrodectus tredecimguttatus (Mediterranean black widow spider) protein is Alpha-latrotoxin-associated low molecular weight protein-2.